The following is a 102-amino-acid chain: NADH-quinone oxidoreductase subunit K 2 (102 aa).

3 consecutive transmembrane segments (helical) span residues 5 to 25 (FEHVLILAGLLFALGLVCVLV), 30 to 50 (LIMLLIGIEVMLNAAMLAFVG), and 65 to 85 (LIIMALTSAEVSLALAMVVYL).

The protein belongs to the complex I subunit 4L family. In terms of assembly, NDH-1 is composed of 14 different subunits. Subunits NuoA, H, J, K, L, M, N constitute the membrane sector of the complex.

It localises to the cell inner membrane. It carries out the reaction a quinone + NADH + 5 H(+)(in) = a quinol + NAD(+) + 4 H(+)(out). Its function is as follows. NDH-1 shuttles electrons from NADH, via FMN and iron-sulfur (Fe-S) centers, to quinones in the respiratory chain. The immediate electron acceptor for the enzyme in this species is believed to be ubiquinone. Couples the redox reaction to proton translocation (for every two electrons transferred, four hydrogen ions are translocated across the cytoplasmic membrane), and thus conserves the redox energy in a proton gradient. The chain is NADH-quinone oxidoreductase subunit K 2 from Geobacter sulfurreducens (strain ATCC 51573 / DSM 12127 / PCA).